The following is a 420-amino-acid chain: COP9 signalosome complex subunit 5 (420 aa).

The MPN domain occupies 73 to 208 (AALSALACMK…IGAFRTMPET (136 aa)). Residues His154, His156, and Asp167 each contribute to the Zn(2+) site. The JAMM motif motif lies at 154-167 (HSHPGYGCWLSGID).

It belongs to the peptidase M67A family. CSN5 subfamily. Component of the COP9 signalosome (CSN) complex.

The protein localises to the cytoplasm. The protein resides in the nucleus. Catalytic component of the COP9 signalosome (CSN) complex that acts as an regulator of the ubiquitin (Ubl) conjugation pathway by mediating the deneddylation of the cullin subunit of SCF-type E3 ubiquitin-protein ligase complexes. The CSN complex is involved in the regulation of the mating pheromone response. This is COP9 signalosome complex subunit 5 (RRI1) from Eremothecium gossypii (strain ATCC 10895 / CBS 109.51 / FGSC 9923 / NRRL Y-1056) (Yeast).